Consider the following 133-residue polypeptide: DUF35 domain-containing scaffold protein (133 aa).

Zn(2+) contacts are provided by Cys-23, Cys-26, Cys-37, and Cys-40.

Belongs to the scaffold protein DUF35 family. As to quaternary structure, interacts with acetoacetyl-CoA thiolase and HMG-CoA synthase (HMGCS) that catalyzes the first and second step in the mevalonate pathway, respectively.

Functions as a scaffold to connect the acetoacetyl-CoA thiolase and HMG-CoA synthase (HMGCS) dimers in the channeling thiolase/HMGCS complex, which allows for efficient coupling of the endergonic thiolase reaction with the exergonic HMGCS reaction. This Methanothermobacter thermautotrophicus (strain ATCC 29096 / DSM 1053 / JCM 10044 / NBRC 100330 / Delta H) (Methanobacterium thermoautotrophicum) protein is DUF35 domain-containing scaffold protein.